Reading from the N-terminus, the 125-residue chain is C-X-C motif chemokine 9 (125 aa).

An N-terminal signal peptide occupies residues M1 to G21. Disulfide bonds link C30–C57 and C32–C73. Positions Q91–T125 are disordered. Residues N93 to T125 are compositionally biased toward basic residues.

It belongs to the intercrine alpha (chemokine CxC) family.

It localises to the secreted. In terms of biological role, cytokine that affects the growth, movement, or activation state of cells that participate in immune and inflammatory response. Chemotactic for activated T-cells. Binds to CXCR3. The sequence is that of C-X-C motif chemokine 9 (CXCL9) from Bos taurus (Bovine).